Reading from the N-terminus, the 1025-residue chain is MSNLLKDFEVASKNPSLEARQRWRSSVGLVKNRARRFRMISNLDKLAENEKKRCQIQEKIRVVFYVQKAAFQFIDAGARPEYKLTDEVKKAGFYVEADELASMVRNHDTKSLTKIGGPEGIAQKVSVSLAEGVRSSELHIREKIYGENRYTEKPARSFLTFVWEALQDITLIILMVCAVVSIGVGVATEGFPKGMYDGTGILLSIILVVMVTAISDYKQSLQFRDLDREKKKIIIQVTRDGSRQEVSIHDLVVGDVVHLSIGDQVPADGIFISGYNLEIDESSLSGESEPSHVNKEKPFLLSGTKVQNGSAKMLVTTVGMRTEWGKLMDTLSEGGEDETPLQVKLNGVATIIGKIGLGFAVLTFVVLCIRFVVEKATAGSITEWSSEDALTLLDYFAIAVTIIVVAVPEGLPLAVTLSLAFAMKQLMSDRALVRHLAACETMGSSTCICTDKTGTLTTNHMVVNKVWICENIKERQEENFQLNLSEQVKNILIQAIFQNTGSEVVKDKEGKTQILGSPTERAILEFGLLLGGDVDTQRREHKILKIEPFNSDKKKMSVLTSHSGGKVRAFCKGASEIVLKMCEKVVDSNGESVPLSEEKIASISDVIEGFASEALRTLCLVYTDLDEAPRGDLPNGGYTLVAVVGIKDPVRPGVREAVQTCQAAGITVRMVTGDNISTAKAIAKECGILTAGGVAIEGSDFRNLPPHEMRAILPKIQVMARSLPLDKHTLVNNLRKMGEVVAVTGDGTNDAPALHEADIGLAMGIAGTEVAKENADVIIMDDNFATIVNVAKWGRAVYINIQKFVQFQLTVNVVALIINFVSACITGSAPLTAVQLLWVNMIMDTLGALALATEPPNEGLMKRQPIGRTASFITRAMWRNIIGQSIYQLIVLGILNFAGKQILNLNGPDSTIVLNTIIFNSFVFCQVFNEVNSREIEKINVFEGMFKSWVFVAVMTATVGFQVIIVEFLGAFASTVPLSWQHWLLCILIGSVSMILAVGLKCIPVESNRHHDGYELLPSGPSDSA.

Residues 1–157 (MSNLLKDFEV…NRYTEKPARS (157 aa)) are Cytoplasmic-facing. The tract at residues 19 to 30 (ARQRWRSSVGLV) is interaction with calmodulin. Residues 158-178 (FLTFVWEALQDITLIILMVCA) traverse the membrane as a helical segment. The Lumenal segment spans residues 179 to 196 (VVSIGVGVATEGFPKGMY). The helical transmembrane segment at 197–217 (DGTGILLSIILVVMVTAISDY) threads the bilayer. The Cytoplasmic segment spans residues 218-345 (KQSLQFRDLD…EDETPLQVKL (128 aa)). Residues 346 to 365 (NGVATIIGKIGLGFAVLTFV) form a helical membrane-spanning segment. The Lumenal segment spans residues 366-395 (VLCIRFVVEKATAGSITEWSSEDALTLLDY). A helical membrane pass occupies residues 396-413 (FAIAVTIIVVAVPEGLPL). Residues 414-801 (AVTLSLAFAM…KWGRAVYINI (388 aa)) lie on the Cytoplasmic side of the membrane. Asp451 acts as the 4-aspartylphosphate intermediate in catalysis. The Mg(2+) site is built by Asp746 and Asp750. A helical transmembrane segment spans residues 802-820 (QKFVQFQLTVNVVALIINF). Topologically, residues 821–831 (VSACITGSAPL) are lumenal. A helical transmembrane segment spans residues 832–852 (TAVQLLWVNMIMDTLGALALA). Over 853 to 872 (TEPPNEGLMKRQPIGRTASF) the chain is Cytoplasmic. A helical membrane pass occupies residues 873–895 (ITRAMWRNIIGQSIYQLIVLGIL). Over 896-907 (NFAGKQILNLNG) the chain is Lumenal. The chain crosses the membrane as a helical span at residues 908-929 (PDSTIVLNTIIFNSFVFCQVFN). The Cytoplasmic segment spans residues 930–947 (EVNSREIEKINVFEGMFK). A helical transmembrane segment spans residues 948–969 (SWVFVAVMTATVGFQVIIVEFL). Residues 970–979 (GAFASTVPLS) are Lumenal-facing. A helical membrane pass occupies residues 980-1001 (WQHWLLCILIGSVSMILAVGLK). The Cytoplasmic segment spans residues 1002–1025 (CIPVESNRHHDGYELLPSGPSDSA).

Belongs to the cation transport ATPase (P-type) (TC 3.A.3) family. Type IIB subfamily.

It is found in the membrane. It carries out the reaction Ca(2+)(in) + ATP + H2O = Ca(2+)(out) + ADP + phosphate + H(+). Its activity is regulated as follows. Activated by calmodulin. Functionally, this magnesium-dependent enzyme catalyzes the hydrolysis of ATP coupled with the translocation of calcium from the cytosol out of the cell or into organelles. This is Putative calcium-transporting ATPase 11, plasma membrane-type (ACA11) from Arabidopsis thaliana (Mouse-ear cress).